Reading from the N-terminus, the 331-residue chain is Ribosomal RNA small subunit methyltransferase H (331 aa).

S-adenosyl-L-methionine-binding positions include 38–40 (GGY), aspartate 56, phenylalanine 83, aspartate 100, and glutamine 107. The interval 289 to 331 (AELAENPRARSARLRVGVRTDAPAGKVDPQALGTPLIPKKGRR) is disordered.

Belongs to the methyltransferase superfamily. RsmH family.

The protein resides in the cytoplasm. It catalyses the reaction cytidine(1402) in 16S rRNA + S-adenosyl-L-methionine = N(4)-methylcytidine(1402) in 16S rRNA + S-adenosyl-L-homocysteine + H(+). Specifically methylates the N4 position of cytidine in position 1402 (C1402) of 16S rRNA. The protein is Ribosomal RNA small subunit methyltransferase H of Cereibacter sphaeroides (strain ATCC 17029 / ATH 2.4.9) (Rhodobacter sphaeroides).